A 256-amino-acid chain; its full sequence is Alcohol dehydrogenase (256 aa).

12–35 (FVAGLGGIGLDTSKELVKRDLKNL) serves as a coordination point for NAD(+). Serine 140 is a substrate binding site. Catalysis depends on tyrosine 153, which acts as the Proton acceptor.

This sequence belongs to the short-chain dehydrogenases/reductases (SDR) family. Homodimer.

It carries out the reaction a primary alcohol + NAD(+) = an aldehyde + NADH + H(+). The enzyme catalyses a secondary alcohol + NAD(+) = a ketone + NADH + H(+). The sequence is that of Alcohol dehydrogenase (Adh) from Drosophila orena (Fruit fly).